Consider the following 159-residue polypeptide: Photosystem I reaction center subunit XI (159 aa).

A run of 3 helical transmembrane segments spans residues 53 to 73 (LEIG…LGPL), 84 to 104 (LISG…YGIV), and 125 to 145 (FTAG…TLLE).

Belongs to the PsaL family.

It is found in the cellular thylakoid membrane. This Cyanothece sp. (strain PCC 7425 / ATCC 29141) protein is Photosystem I reaction center subunit XI.